Here is a 113-residue protein sequence, read N- to C-terminus: Small ribosomal subunit protein mS41 (113 aa).

The transit peptide at 1-22 directs the protein to the mitochondrion; it reads MLILKRIFIIRNFIFPFSNCRY.

Belongs to the mitochondrion-specific ribosomal protein mS41 family. As to quaternary structure, component of the mitochondrial small ribosomal subunit (mt-SSU). Mature yeast 74S mitochondrial ribosomes consist of a small (37S) and a large (54S) subunit. The 37S small subunit contains a 15S ribosomal RNA (15S mt-rRNA) and at least 32 different proteins. The 54S large subunit contains a 21S rRNA (21S mt-rRNA) and at least 45 different proteins.

It localises to the mitochondrion. Component of the mitochondrial ribosome (mitoribosome), a dedicated translation machinery responsible for the synthesis of mitochondrial genome-encoded proteins, including at least some of the essential transmembrane subunits of the mitochondrial respiratory chain. The mitoribosomes are attached to the mitochondrial inner membrane and translation products are cotranslationally integrated into the membrane. mS41 is involved in telomere length regulation. In Schizosaccharomyces pombe (strain 972 / ATCC 24843) (Fission yeast), this protein is Small ribosomal subunit protein mS41 (fyv4).